Consider the following 249-residue polypeptide: Granaticin polyketide synthase putative ketoacyl reductase 2 (249 aa).

12–36 contacts NAD(+); sequence LVTGSSSGIGQTVAQRLAAEGYRVV. S144 provides a ligand contact to substrate. The active-site Proton acceptor is Y157.

It belongs to the short-chain dehydrogenases/reductases (SDR) family.

Its pathway is antibiotic biosynthesis; granaticin biosynthesis. The sequence is that of Granaticin polyketide synthase putative ketoacyl reductase 2 (gra-orf6) from Streptomyces violaceoruber.